The sequence spans 233 residues: Small ribosomal subunit protein uS2 (233 aa).

This sequence belongs to the universal ribosomal protein uS2 family.

The protein is Small ribosomal subunit protein uS2 of Clostridium novyi (strain NT).